Here is a 515-residue protein sequence, read N- to C-terminus: MMQVLLVTICLAVFPYQGSSIILESGNVNDYEVVYPQKVTALPKGAVQQAEQKYEDAMQYEFEVNGQPVVLHLEKNKDLFSEDYSETHYSPDGKEITTNPPIEDHCYYHGRIQNDAHSTASISACNGLKGHFKLRGETYLIEPLKIPDSEAHAVYKYENIEKEDDAPKMCGVTQTNWESDEPIKEASQLVATSDQQRYYDHFRYIKYFIVVDHRMVEKYNGNLRTIRRRIYQLVNILNEIYLPWNIRAPLVGIEFWNQRDLINVTSSAPYTLDLFGKWRASDLLNRKIHDYTHLLTAIVFVEQILGMAHIATMCHSELSVGLVQDYMPSEHVVAAIMVHEMGHNLGISHDEKYCNCGADSCIMYPQISIPPPVYFSNCSWEQYQNFLTIYKPDCTLIRPSRTDIVSPPVCGNDILEQGEECDCGSPEKCQDPCCDAASCKLHSWIECEFGECCDQCRFKPAGTECRGIRSECDLPEYCTGQSVDCPIDHFHRNGKPCLNNNGAEKGEFQHTGGRY.

Residues 1–20 (MMQVLLVTICLAVFPYQGSS) form the signal peptide. Positions 21–193 (IILESGNVND…KEASQLVATS (173 aa)) are excised as a propeptide. A Peptidase M12B domain is found at 203-399 (RYIKYFIVVD…YKPDCTLIRP (197 aa)). N-linked (GlcNAc...) asparagine glycosylation is present at N263. Cystine bridges form between C314/C394, C354/C378, C356/C361, C410/C429, C421/C439, C423/C434, C433/C456, C447/C453, C452/C478, C465/C485, and C472/C497. H339 is a binding site for Zn(2+). Residue E340 is part of the active site. 2 residues coordinate Zn(2+): H343 and H349. N-linked (GlcNAc...) asparagine glycosylation occurs at N377. In terms of domain architecture, Disintegrin spans 407–493 (PPVCGNDILE…DCPIDHFHRN (87 aa)). Positions 471-473 (ECD) match the D/ECD-tripeptide motif.

The protein belongs to the venom metalloproteinase (M12B) family. P-II subfamily. In terms of assembly, monomer. It depends on Zn(2+) as a cofactor. In terms of tissue distribution, expressed by the venom gland.

The protein localises to the secreted. Functionally, snake venom zinc metalloprotease that possesses hemorrhagic activity and degrades alpha chain of fibrinogen (FGA). May inhibit alpha-2/beta-1 integrin (ITGA2/ITGB1). The chain is Zinc metalloproteinase-disintegrin BA-5A from Bitis arietans (African puff adder).